The primary structure comprises 420 residues: Glutamate dehydrogenase (420 aa).

The active site involves Lys105. 220-226 (GYGNAGY) contacts NAD(+).

The protein belongs to the Glu/Leu/Phe/Val dehydrogenases family. Homohexamer.

The protein localises to the cytoplasm. It carries out the reaction L-glutamate + NAD(+) + H2O = 2-oxoglutarate + NH4(+) + NADH + H(+). It catalyses the reaction L-glutamate + NADP(+) + H2O = 2-oxoglutarate + NH4(+) + NADPH + H(+). The polypeptide is Glutamate dehydrogenase (gdhA) (Pyrococcus abyssi (strain GE5 / Orsay)).